The following is a 341-amino-acid chain: FVMKREPLRFRDITVEGNENAYIKNGKLHLSLMDPSTLSLVTKADGKIDMTVDLISPVTKRASLKIDSKKYNLFHEGELSASIVNPRLSWHQYTKRDSREYKSDVELSLRSSDIALKITMPDYNSKIHYSRQGDQINMDIDGTLIEGHAQGTIREGKIHIKGRQTDFEIESNYRYEDGKLIIEPVKSENGKLEGVLSRKVPSHLTLETPRVKMNMKYDRYAPVKVFKLDYDGIHFEKHTDIEYEPGVRYKIIGNGKLKDDGRHYSIDVQGIPRKAFNLDADLMDFKLKVSKPEDSNKAQFSYTFNEYTETEEYEFDPHRAYYVNWLSSIRKYIQNFIVEDN.

This is Allergen Mag (MAG) from Dermatophagoides farinae (American house dust mite).